A 161-amino-acid polypeptide reads, in one-letter code: FAD synthase (161 aa).

Residues 19 to 20 (TF), 24 to 27 (HPGH), aspartate 106, and tyrosine 133 contribute to the ATP site.

It belongs to the archaeal FAD synthase family. Homodimer. A divalent metal cation serves as cofactor.

It catalyses the reaction FMN + ATP + H(+) = FAD + diphosphate. It functions in the pathway cofactor biosynthesis; FAD biosynthesis; FAD from FMN: step 1/1. Catalyzes the transfer of the AMP portion of ATP to flavin mononucleotide (FMN) to produce flavin adenine dinucleotide (FAD) coenzyme. The polypeptide is FAD synthase (Methanothermobacter marburgensis (strain ATCC BAA-927 / DSM 2133 / JCM 14651 / NBRC 100331 / OCM 82 / Marburg) (Methanobacterium thermoautotrophicum)).